Here is a 352-residue protein sequence, read N- to C-terminus: B1 bradykinin receptor (352 aa).

Residues 1–41 (MASWPPLQLQSSNQSQLFPQNATACDNAPEAWDLLHRVLPT) are Extracellular-facing. Residues asparagine 13 and asparagine 21 are each glycosylated (N-linked (GlcNAc...) asparagine). The helical transmembrane segment at 42–62 (FIISICSFGLLGNLFVLLVFL) threads the bilayer. The Cytoplasmic portion of the chain corresponds to 63–72 (LPRRRLNVAE). The chain crosses the membrane as a helical span at residues 73 to 93 (IYLANLAASDLVFVLGLPFWA). Residues 94–110 (ENIWNQFNWPFGALLCR) lie on the Extracellular side of the membrane. A disulfide bridge connects residues cysteine 109 and cysteine 188. Residues 111 to 131 (VINGIIKANLFISIFLVVAIS) form a helical membrane-spanning segment. At 132-153 (QDRYCVLVHPMASRRRQRRRQA) the chain is on the cytoplasmic side. A helical membrane pass occupies residues 154-174 (RVTCVLIWVVGGLLSIPTFLL). Residues 175 to 206 (RSIQAVPDLNITACILLLPHEAWHFARIVELN) are Extracellular-facing. A glycan (N-linked (GlcNAc...) asparagine) is linked at asparagine 184. The helical transmembrane segment at 207-227 (ILAFLLPLAAIIFFNYHILAS) threads the bilayer. The Cytoplasmic portion of the chain corresponds to 228-250 (LRGREEVSRTRCGGSKDSKTTAL). Residues 251–271 (ILTLVVAFLVCWAPYHFFAFL) form a helical membrane-spanning segment. The Extracellular segment spans residues 272–294 (EFLFQVQAVRGCFWEDFIDLGLQ). A helical membrane pass occupies residues 295–315 (LANFLAFTNSSLNPVIYVFAG). At 316 to 352 (RLFRTKVWELYKQCTPKSLAPISSSHRKEIFQLFWRN) the chain is on the cytoplasmic side. Cysteine 329 carries the S-palmitoyl cysteine lipid modification.

This sequence belongs to the G-protein coupled receptor 1 family. Bradykinin receptor subfamily. BDKRB1 sub-subfamily.

The protein resides in the cell membrane. Functionally, this is a receptor for bradykinin. Could be a factor in chronic pain and inflammation. In Macaca fascicularis (Crab-eating macaque), this protein is B1 bradykinin receptor (BDKRB1).